Consider the following 594-residue polypeptide: P-granule-associated novel protein 1 (594 aa).

Residues M1–S18 form the signal peptide. Residues E19 to G513 are Extracellular-facing. 15 LRR repeats span residues G78–N101, F103–S124, L125–G149, L150–E173, K175–G197, M198–G221, L222–A245, L246–K269, E271–D290, L291–L315, S318–H341, P343–Q365, L374–K397, L399–G419, and M420–S442. A helical transmembrane segment spans residues W514–A534. The Cytoplasmic portion of the chain corresponds to M535–F594.

Interacts with glh-1. Interacts (via LRR regions) with myrf-1 (via C-terminus); the interaction promotes the role of myrf-1 in the synaptic remodeling of DD GABAergic motor neurons at the cell membrane. In terms of tissue distribution, expressed in the germline and somatic cells. As to expression, expressed in the germline and somatic cells. Expressed at higher levels in germline cells relative to somatic cells. Expressed in germline cells. In terms of tissue distribution, highly expressed in the pharynx and at lower levels in the intestine, but not detected in other tissues. Other studies suggest a broader expression pattern in somatic tissues: from embryogenesis to adult stages, expressed strongly in body wall muscle, vulva, somatic gonad and pharynx, at lower levels in the nerve ring, hypodermis, and rectal epithelia, and very weakly in the intestine.

Its subcellular location is the cytoplasm. The protein resides in the apical cell membrane. Its function is as follows. Regulates diverse developmental processes including larval molting and gonad maturation. In terms of biological role, promotes the localization of myrf-1 and myrf-2 to the cell membrane. In association with myrf-1, promotes the synaptic remodeling of DD GABAergic motor neurons whereby new synapses form in the dorsal processes of DD neurons. This Caenorhabditis elegans protein is P-granule-associated novel protein 1.